We begin with the raw amino-acid sequence, 383 residues long: tRNA-specific 2-thiouridylase MnmA (383 aa).

Residues 30 to 37 and leucine 56 contribute to the ATP site; that span reads GLSGGVDS. Cysteine 117 (nucleophile) is an active-site residue. The cysteines at positions 117 and 216 are disulfide-linked. Residue glycine 142 participates in ATP binding. Residues 166–168 form an interaction with tRNA region; that stretch reads KDQ. Cysteine 216 functions as the Cysteine persulfide intermediate in the catalytic mechanism. Residues 321-322 form an interaction with tRNA region; it reads RY.

The protein belongs to the MnmA/TRMU family.

It localises to the cytoplasm. The enzyme catalyses S-sulfanyl-L-cysteinyl-[protein] + uridine(34) in tRNA + AH2 + ATP = 2-thiouridine(34) in tRNA + L-cysteinyl-[protein] + A + AMP + diphosphate + H(+). In terms of biological role, catalyzes the 2-thiolation of uridine at the wobble position (U34) of tRNA, leading to the formation of s(2)U34. The chain is tRNA-specific 2-thiouridylase MnmA from Synechococcus sp. (strain CC9605).